The sequence spans 91 residues: Small ribosomal subunit protein bS20 (91 aa).

Residues 1–18 (MPLHKSAEKRLRQSERRN) show a composition bias toward basic and acidic residues. Residues 1–26 (MPLHKSAEKRLRQSERRNARNRSRKK) are disordered.

This sequence belongs to the bacterial ribosomal protein bS20 family.

Binds directly to 16S ribosomal RNA. This is Small ribosomal subunit protein bS20 from Pelodictyon phaeoclathratiforme (strain DSM 5477 / BU-1).